Here is a 385-residue protein sequence, read N- to C-terminus: Tuliposide A-converting enzyme 1, chloroplastic (385 aa).

Residues 1 to 77 (MSVASFFSSL…PSPSLSPTPT (77 aa)) constitute a chloroplast transit peptide. The active-site Acyl-ester intermediate is serine 235. Catalysis depends on charge relay system residues aspartate 327 and histidine 359.

Belongs to the AB hydrolase superfamily. In terms of assembly, homodimer. As to expression, expressed in roots, stems, leaves, petals, stamens and pistils, but not in bulb scales.

The protein localises to the plastid. The protein resides in the chloroplast. The enzyme catalyses 6-tuliposide A = tulipalin A + D-glucose. With respect to regulation, inhibited by NaF, AgNO(3), HgCl(2), CuSO(4) and phenylmethylsulfonyl fluoride (PMSF). Functionally, lactone-forming carboxylesterases, specifically catalyzing intramolecular transesterification, but not hydrolysis. Involved in the biosynthesis of tulipalins, defensive chemicals that show antimicrobial activities against a broad range of strains of bacteria and fungi. Substrates are 6-tuliposide A &gt; 6-tuliposide B. The polypeptide is Tuliposide A-converting enzyme 1, chloroplastic (TCEA1) (Tulipa gesneriana (Garden tulip)).